Here is a 356-residue protein sequence, read N- to C-terminus: Alanine racemase, catabolic (356 aa).

Lys-35 functions as the Proton acceptor; specific for D-alanine in the catalytic mechanism. Lys-35 is modified (N6-(pyridoxal phosphate)lysine). A substrate-binding site is contributed by Arg-130. The active-site Proton acceptor; specific for L-alanine is the Tyr-253. Residue Met-301 coordinates substrate.

The protein belongs to the alanine racemase family. The cofactor is pyridoxal 5'-phosphate.

The enzyme catalyses L-alanine = D-alanine. Its function is as follows. Isomerizes L-alanine to D-alanine which is then oxidized to pyruvate by DadA. The protein is Alanine racemase, catabolic (dadX) of Salmonella typhi.